The following is a 239-amino-acid chain: Ribonuclease P protein component 3 (239 aa).

The protein belongs to the eukaryotic/archaeal RNase P protein component 3 family. In terms of assembly, consists of a catalytic RNA component and at least 4-5 protein subunits.

It localises to the cytoplasm. It catalyses the reaction Endonucleolytic cleavage of RNA, removing 5'-extranucleotides from tRNA precursor.. Its function is as follows. Part of ribonuclease P, a protein complex that generates mature tRNA molecules by cleaving their 5'-ends. This is Ribonuclease P protein component 3 from Methanosarcina mazei (strain ATCC BAA-159 / DSM 3647 / Goe1 / Go1 / JCM 11833 / OCM 88) (Methanosarcina frisia).